Here is a 160-residue protein sequence, read N- to C-terminus: Probable cyclic pyranopterin monophosphate synthase (160 aa).

Positions 1 to 12 (MSDDSELTHVTD) are enriched in basic and acidic residues. Residues 1–24 (MSDDSELTHVTDDGDAQMVDVGEK) form a disordered region. Residues 78-80 (MCH) and 114-115 (ME) contribute to the substrate site. Residue D129 is part of the active site.

It belongs to the MoaC family. Homohexamer; trimer of dimers.

The catalysed reaction is (8S)-3',8-cyclo-7,8-dihydroguanosine 5'-triphosphate = cyclic pyranopterin phosphate + diphosphate. It participates in cofactor biosynthesis; molybdopterin biosynthesis. Catalyzes the conversion of (8S)-3',8-cyclo-7,8-dihydroguanosine 5'-triphosphate to cyclic pyranopterin monophosphate (cPMP). This chain is Probable cyclic pyranopterin monophosphate synthase, found in Natronomonas pharaonis (strain ATCC 35678 / DSM 2160 / CIP 103997 / JCM 8858 / NBRC 14720 / NCIMB 2260 / Gabara) (Halobacterium pharaonis).